We begin with the raw amino-acid sequence, 263 residues long: Small ribosomal subunit protein uS2 (263 aa).

The protein belongs to the universal ribosomal protein uS2 family. In terms of assembly, component of the small ribosomal subunit. Mature ribosomes consist of a small (40S) and a large (60S) subunit. The 40S subunit contains about 33 different proteins and 1 molecule of RNA (18S). The 60S subunit contains about 49 different proteins and 3 molecules of RNA (25S, 5.8S and 5S). Interacts with RPS21.

The protein resides in the cytoplasm. Its function is as follows. Required for the assembly and/or stability of the 40S ribosomal subunit. Required for the processing of the 20S rRNA-precursor to mature 18S rRNA in a late step of the maturation of 40S ribosomal subunits. The polypeptide is Small ribosomal subunit protein uS2 (Vairimorpha ceranae (strain BRL01) (Microsporidian parasite)).